A 402-amino-acid polypeptide reads, in one-letter code: Homoserine O-acetyltransferase (402 aa).

The span at 1-17 (MDWQTTSADTAPSSFIT) shows a compositional bias: polar residues. Residues 1-39 (MDWQTTSADTAPSSFITEEQDRSLFGKPPASGAWKESDP) form a disordered region. Residues 78–388 (NAVLVLHALT…HFGHDGFLIE (311 aa)) form the AB hydrolase-1 domain. Ser183 acts as the Nucleophile in catalysis. Arg255 serves as a coordination point for substrate. Residues Asp349 and His382 contribute to the active site. Position 383 (Asp383) interacts with substrate.

This sequence belongs to the AB hydrolase superfamily. MetX family. As to quaternary structure, homodimer.

Its subcellular location is the cytoplasm. It catalyses the reaction L-homoserine + acetyl-CoA = O-acetyl-L-homoserine + CoA. The protein operates within amino-acid biosynthesis; L-methionine biosynthesis via de novo pathway; O-acetyl-L-homoserine from L-homoserine: step 1/1. In terms of biological role, transfers an acetyl group from acetyl-CoA to L-homoserine, forming acetyl-L-homoserine. The sequence is that of Homoserine O-acetyltransferase from Leifsonia xyli subsp. xyli (strain CTCB07).